We begin with the raw amino-acid sequence, 849 residues long: MLAAESSNKELFIKNDGKALSFPYDWKLATHVICDDFSSPNVQEGSKRSLRLAKTNWIRDCVDKNTLLNYSFYSCNPYLLFKGICASSCQIDSYQSSLIDDALETFGGRFSKGLMKSMTHLFTYSGMGAKCKKVLDKPSLSIKLIHPQWLLDCLQFGQLIDQDPYLFPNPSYKKNDSSISKAEPTSLFRNVLHGKRIYFSNDLNLPTNFRHSLQKFSVGIGAKIAESINDCDIFIGLKRDTIEFNLASNKNTTIGTISWLLNLFVLGSWKSPLLNALHYPFPSVGFLKDQMVAVTNYTDAARIYLEKLLLACGATYTKDLKPTNTLLIAASSYGQKYGAAKVWNIPTVHHSWLYSSFKNLSSQAFTDFPVPLDDSYMDFIFPCPLNVEKGSFEDTLKSSLTKGNSEVLLDDLSDPSVSSIKGNKTNEELEKEFKSTSDNFGKHIILTSSFSNQSADKGSSLAAEDDRNDEGSTITGVNRELQDEGRLEIDAKSSKTNTPPSPLLVGTPSKESLKEASSDDELPVLATKLVDNVIKEKSPLSLTPKVVVPSHKETYTDEKKLIDELDRVNPLNSSQLLRSKRKSAATALSMLQNVIMPDVLAFEREKKRRQTHRSVSSGEVSRESSESRNTNAKASKRVYITFTGYDKKPSIDNLKKLDMSITSNPSKCTHLIAPRILRTSKFLCSIPYGPCVVTMDWINSCLKTHEIVDEEPYLLNDPEKELELGCTLESALKRARAQGPSLLEDYVVYLTSKTVAPENVPAVISIVKSNGGVCSTLNVYNKRLARHLEDGNVVLITCNEDSHIWTNFLDNASQNKTIFLQNYDWLIKTVLRQEIDVNDRIADEFARAV.

3 consecutive BRCT domains span residues 1-75, 76-167, and 282-370; these read MLAA…FYSC, NPYL…PYLF, and PSVG…DFPV. 2 disordered regions span residues 453 to 519 and 606 to 632; these read QSAD…ASSD and KKRR…NTNA. The segment covering 480 to 493 has biased composition (basic and acidic residues); sequence ELQDEGRLEIDAKS. BRCT domains are found at residues 625-715 and 738-843; these read SESR…PYLL and QGPS…RIAD.

In terms of assembly, interacts with gammaH2A; binds phosphohistone H2A (gammaH2A) formed by Rad3/ATR checkpoint kinase at DNA lesions. Interacts with Rhp18/Rad18. Interacts with Nse5-Nse6; this allows to tether Smc5-Smc6 at replicative DNA lesions.

The protein resides in the nucleus. Its subcellular location is the chromosome. Its function is as follows. Required for resumption of chromosome replication after DNA damage, specifically in S phase. Is recruited to chromatin in response to stalled replication forks and acts as a scaffold during DNA repair. Required for the accumulation of the Smc5-Smc6 genome stability complex in foci during replication stress and for activation of the intrinsic SUMO ligase activity of the complex by collapsed replication forks. In pericentromeric heterochromatin, enhances Clr4/Suv39-mediated H3 Lys-9 dimethylation (H3K9me2), required for stabilization of stalled replication forks and accurate chromosome segregation during mitosis. Required for mitotic fidelity, specifically in the G2 phase of the cell cycle. Plays a role in chromatin organization. This Schizosaccharomyces pombe (strain 972 / ATCC 24843) (Fission yeast) protein is BRCT-containing protein 1 (brc1).